Consider the following 596-residue polypeptide: Chaperone protein DnaK (596 aa).

Thr180 is subject to Phosphothreonine; by autocatalysis.

It belongs to the heat shock protein 70 family.

Its function is as follows. Acts as a chaperone. This chain is Chaperone protein DnaK, found in Thermotoga neapolitana (strain ATCC 49049 / DSM 4359 / NBRC 107923 / NS-E).